Here is a 322-residue protein sequence, read N- to C-terminus: Malate dehydrogenase (322 aa).

NAD(+) contacts are provided by residues glycine 10–glycine 15 and aspartate 34. Substrate is bound by residues arginine 83 and arginine 89. Residues asparagine 96 and isoleucine 119–asparagine 121 contribute to the NAD(+) site. Asparagine 121 and arginine 152 together coordinate substrate. The Proton acceptor role is filled by histidine 176.

This sequence belongs to the LDH/MDH superfamily. MDH type 3 family.

It catalyses the reaction (S)-malate + NAD(+) = oxaloacetate + NADH + H(+). Catalyzes the reversible oxidation of malate to oxaloacetate. In Bradyrhizobium sp. (strain ORS 278), this protein is Malate dehydrogenase.